A 491-amino-acid chain; its full sequence is Probable V-type proton ATPase subunit B 1 (491 aa).

R380 is an ATP binding site.

It belongs to the ATPase alpha/beta chains family. As to quaternary structure, V-ATPase is a heteromultimeric enzyme made up of two complexes: the ATP-hydrolytic V1 complex and the proton translocation V0 complex. The V1 complex consists of three catalytic AB heterodimers that form a heterohexamer, three peripheral stalks each consisting of EG heterodimers, one central rotor including subunits D and F, and the regulatory subunits C and H. The proton translocation complex V0 consists of the proton transport subunit a, a ring of proteolipid subunits c9c'', rotary subunit d, subunits e and f, and the accessory subunits vah-19/Ac45 and vah-20/PRR.

Its function is as follows. Non-catalytic subunit of the V1 complex of vacuolar(H+)-ATPase (V-ATPase), a multisubunit enzyme composed of a peripheral complex (V1) that hydrolyzes ATP and a membrane integral complex (V0) that translocates protons. V-ATPase is responsible for acidifying and maintaining the pH of intracellular compartments and in some cell types, is targeted to the plasma membrane, where it is responsible for acidifying the extracellular environment. Essential for the proper assembly and activity of V-ATPase. Required maternally for early embryogenesis and zygotically during morphogenesis. Specifically, involved in the clearance of apoptotic cell corpses in embryos. Also, during embryonic development, the V-ATPase is required to repress fusion of epidermal cells probably by negatively regulating eff-1-mediated cell fusion. In neurons, required for necrotic cell death by promoting intracellular acidification. Required for cell death induced by hypoxia. Required for acidification of synaptic vesicles and the release of neurotransmitters from adult neurons. The polypeptide is Probable V-type proton ATPase subunit B 1 (Caenorhabditis briggsae).